The following is a 303-amino-acid chain: Taste receptor type 2 member 13 (303 aa).

The Extracellular portion of the chain corresponds to 1–7; sequence MESALPS. Residues 8–28 form a helical membrane-spanning segment; that stretch reads IFTLVIIAEFIIGNLSNGFIV. Residues 29–55 lie on the Cytoplasmic side of the membrane; the sequence is LINCIDWVSKRELSSVDKLLIILAISR. Residues 56–76 traverse the membrane as a helical segment; that stretch reads IGLIWEILVSWFLALHYLAIF. Residues 77-85 lie on the Extracellular side of the membrane; the sequence is VSGTGLRIM. Residues 86–106 form a helical membrane-spanning segment; it reads IFSWIVSNHFNLWLATIFSIF. Topologically, residues 107-128 are cytoplasmic; it reads YLLKIASFSSPAFLYLKWRVNK. A helical membrane pass occupies residues 129-149; that stretch reads VILMILLGTLVFLFLNLIQIN. Over 150-184 the chain is Extracellular; it reads MHIKDWLDRYERNTTWNFSMSDFETFSVSVKFTMT. 2 N-linked (GlcNAc...) asparagine glycosylation sites follow: Asn-162 and Asn-166. The chain crosses the membrane as a helical span at residues 185-205; sequence MFSLTPFTVAFISFLLLIFSL. The Cytoplasmic portion of the chain corresponds to 206–232; that stretch reads QKHLQKMQLNYKGHRDPRTKVHTNALK. The chain crosses the membrane as a helical span at residues 233 to 253; it reads IVISFLLFYASFFLCVLISWI. The Extracellular portion of the chain corresponds to 254–261; the sequence is SELYQNTV. The helical transmembrane segment at 262-282 threads the bilayer; that stretch reads IYMLCETIGVFSPSSHSFLLI. At 283–303 the chain is on the cytoplasmic side; that stretch reads LGNAKLRQAFLLVAAKVWAKR.

Belongs to the G-protein coupled receptor T2R family. Expressed in subsets of taste receptor cells of the tongue and palate epithelium and exclusively in gustducin-positive cells.

It is found in the membrane. In terms of biological role, receptor that may play a role in the perception of bitterness and is gustducin-linked. May play a role in sensing the chemical composition of the gastrointestinal content. The activity of this receptor may stimulate alpha gustducin, mediate PLC-beta-2 activation and lead to the gating of TRPM5. This Homo sapiens (Human) protein is Taste receptor type 2 member 13 (TAS2R13).